Reading from the N-terminus, the 434-residue chain is Trigger factor (434 aa).

The PPIase FKBP-type domain maps to 160–245 (GDKVKMNFVG…LTEVQAANLP (86 aa)).

This sequence belongs to the FKBP-type PPIase family. Tig subfamily.

It is found in the cytoplasm. It carries out the reaction [protein]-peptidylproline (omega=180) = [protein]-peptidylproline (omega=0). Functionally, involved in protein export. Acts as a chaperone by maintaining the newly synthesized protein in an open conformation. Functions as a peptidyl-prolyl cis-trans isomerase. This is Trigger factor from Shewanella sp. (strain W3-18-1).